We begin with the raw amino-acid sequence, 402 residues long: Phytoene synthase 2, chloroplastic (402 aa).

The N-terminal 54 residues, 1–54, are a transit peptide targeting the chloroplast; that stretch reads MAAGSSAVWAAQHPACSGGKFHHLSPSHSHCRPRRALQTPPALPARRSGASPPR. A compositionally biased stretch (basic residues) spans 20 to 35; sequence KFHHLSPSHSHCRPRR. The disordered stretch occupies residues 20-54; sequence KFHHLSPSHSHCRPRRALQTPPALPARRSGASPPR. The segment covering 44 to 54 has biased composition (low complexity); the sequence is PARRSGASPPR.

Belongs to the phytoene/squalene synthase family. Expressed in leaves and endosperm.

Its subcellular location is the plastid. It is found in the chloroplast. The protein localises to the plastoglobule. The enzyme catalyses 2 (2E,6E,10E)-geranylgeranyl diphosphate = 15-cis-phytoene + 2 diphosphate. Its function is as follows. Catalyzes the conversion of geranylgeranyl diphosphate to phytoene. Mediates the first committed step in carotenoid biosynthesis. The sequence is that of Phytoene synthase 2, chloroplastic from Zea mays (Maize).